Reading from the N-terminus, the 269-residue chain is Shikimate dehydrogenase (NADP(+)) (269 aa).

Shikimate-binding positions include 17-19 (SKS) and Thr64. The Proton acceptor role is filled by Lys68. Glu80 provides a ligand contact to NADP(+). Shikimate is bound by residues Asn89 and Asp105. NADP(+) contacts are provided by residues 130–134 (GAGGA), 154–159 (NRTHAK), and Met213. Tyr215 contacts shikimate. NADP(+) is bound at residue Gly237.

Belongs to the shikimate dehydrogenase family. Homodimer.

It carries out the reaction shikimate + NADP(+) = 3-dehydroshikimate + NADPH + H(+). It participates in metabolic intermediate biosynthesis; chorismate biosynthesis; chorismate from D-erythrose 4-phosphate and phosphoenolpyruvate: step 4/7. Its function is as follows. Involved in the biosynthesis of the chorismate, which leads to the biosynthesis of aromatic amino acids. Catalyzes the reversible NADPH linked reduction of 3-dehydroshikimate (DHSA) to yield shikimate (SA). The polypeptide is Shikimate dehydrogenase (NADP(+)) (Neisseria pharyngis).